The chain runs to 415 residues: Gamma-glutamyl phosphate reductase 1 (415 aa).

Belongs to the gamma-glutamyl phosphate reductase family.

The protein resides in the cytoplasm. The enzyme catalyses L-glutamate 5-semialdehyde + phosphate + NADP(+) = L-glutamyl 5-phosphate + NADPH + H(+). It functions in the pathway amino-acid biosynthesis; L-proline biosynthesis; L-glutamate 5-semialdehyde from L-glutamate: step 2/2. Catalyzes the NADPH-dependent reduction of L-glutamate 5-phosphate into L-glutamate 5-semialdehyde and phosphate. The product spontaneously undergoes cyclization to form 1-pyrroline-5-carboxylate. The chain is Gamma-glutamyl phosphate reductase 1 from Bacillus licheniformis (strain ATCC 14580 / DSM 13 / JCM 2505 / CCUG 7422 / NBRC 12200 / NCIMB 9375 / NCTC 10341 / NRRL NRS-1264 / Gibson 46).